Consider the following 569-residue polypeptide: Intraflagellar transport protein 74/72 (569 aa).

3 coiled-coil regions span residues 75–156 (ITAT…TRNE), 201–231 (YRSL…VAAN), and 271–298 (AITL…AESH).

It belongs to the IFT74 family.

The protein localises to the cell projection. It localises to the cilium. It is found in the flagellum. Its subcellular location is the cytoplasm. The protein resides in the cytoskeleton. The protein localises to the flagellum axoneme. It localises to the flagellum basal body. Component of the intraflagellar transport complex B (IFT-B) involved in flagellar assembly. This is Intraflagellar transport protein 74/72 from Giardia intestinalis (strain ATCC 50803 / WB clone C6) (Giardia lamblia).